A 141-amino-acid polypeptide reads, in one-letter code: Large ribosomal subunit protein uL11 (141 aa).

The protein belongs to the universal ribosomal protein uL11 family. Part of the ribosomal stalk of the 50S ribosomal subunit. Interacts with L10 and the large rRNA to form the base of the stalk. L10 forms an elongated spine to which L12 dimers bind in a sequential fashion forming a multimeric L10(L12)X complex. One or more lysine residues are methylated.

Functionally, forms part of the ribosomal stalk which helps the ribosome interact with GTP-bound translation factors. This Gloeobacter violaceus (strain ATCC 29082 / PCC 7421) protein is Large ribosomal subunit protein uL11.